The sequence spans 282 residues: NAC domain-containing protein 1 (282 aa).

The NAC domain occupies 9–161 (LPPGFRFHPT…DWVLCRIYKK (153 aa)). Residues 106–167 (VGIKKALVFY…IYKKKNLGRT (62 aa)) mediate DNA binding. Residues 161-188 (KKNLGRTIEMMKVEEEELEAQNVSTTNN) adopt a coiled-coil conformation.

In terms of tissue distribution, expressed in roots, stem, flowers, and leaves.

It is found in the nucleus. Its function is as follows. Transcription factor that binds DNA motifs 5'-CGT[AG](5N)NACG[ACT][AC][AT][ACG][ACT]-3' and 5'-CACG[ACT][AC][AT][AGT][CT]-3' in target genes promoters. Promotes leaf senescence and reduces fruit yield and sugar content, probably by establishing abscisic acid (ABA) homeostasis. The protein is NAC domain-containing protein 1 of Solanum lycopersicum (Tomato).